Reading from the N-terminus, the 250-residue chain is 3-deoxy-manno-octulosonate cytidylyltransferase (250 aa).

Belongs to the KdsB family.

The protein localises to the cytoplasm. The catalysed reaction is 3-deoxy-alpha-D-manno-oct-2-ulosonate + CTP = CMP-3-deoxy-beta-D-manno-octulosonate + diphosphate. It functions in the pathway nucleotide-sugar biosynthesis; CMP-3-deoxy-D-manno-octulosonate biosynthesis; CMP-3-deoxy-D-manno-octulosonate from 3-deoxy-D-manno-octulosonate and CTP: step 1/1. Its pathway is bacterial outer membrane biogenesis; lipopolysaccharide biosynthesis. Its function is as follows. Activates KDO (a required 8-carbon sugar) for incorporation into bacterial lipopolysaccharide in Gram-negative bacteria. This is 3-deoxy-manno-octulosonate cytidylyltransferase from Rhizobium meliloti (strain 1021) (Ensifer meliloti).